A 110-amino-acid polypeptide reads, in one-letter code: Large ribosomal subunit protein P2 (110 aa).

Ser-59 carries the post-translational modification O-(pantetheine 4'-phosphoryl)serine; in acyl carrier protein form. A disordered region spans residues Leu-62–Asp-110. The segment covering Ala-63–Ala-84 has biased composition (low complexity). The segment covering Ala-85–Glu-95 has biased composition (basic and acidic residues). A Phosphoserine; in ribosomal stalk form modification is found at Ser-100.

The protein belongs to the eukaryotic ribosomal protein P1/P2 family. The phosphorylated form is part of the ribosomal stalk involved in the interaction of the elongation factors with the ribosome during protein synthesis. The phosphopantetheinylated form is part of the 10S triacylglycerol biosynthetic complex involved in de novo fatty acid biosynthesis. Post-translationally, 4'-phosphopantetheine is transferred from CoA to a specific serine by acpS. This modification is essential for activity because fatty acids are bound in thioester linkage to the sulfhydryl of the prosthetic group.

Its subcellular location is the cytoplasm. In terms of biological role, probable bifunctional protein. The phosphorylated protein plays an important role in the elongation step of protein synthesis. The phosphopantetheinylated protein acts as an acyl carrier protein. The protein is Large ribosomal subunit protein P2 of Rhodotorula glutinis (Yeast).